Here is a 276-residue protein sequence, read N- to C-terminus: Large ribosomal subunit protein uL2 (276 aa).

2 disordered regions span residues 37 to 59 and 224 to 276; these read QFQKSGRNNNGHITTRHKGGGHK and VAMN…RHKR. A compositionally biased stretch (basic residues) spans 50–59; that stretch reads TTRHKGGGHK.

The protein belongs to the universal ribosomal protein uL2 family. As to quaternary structure, part of the 50S ribosomal subunit. Forms a bridge to the 30S subunit in the 70S ribosome.

Its function is as follows. One of the primary rRNA binding proteins. Required for association of the 30S and 50S subunits to form the 70S ribosome, for tRNA binding and peptide bond formation. It has been suggested to have peptidyltransferase activity; this is somewhat controversial. Makes several contacts with the 16S rRNA in the 70S ribosome. In Ralstonia nicotianae (strain ATCC BAA-1114 / GMI1000) (Ralstonia solanacearum), this protein is Large ribosomal subunit protein uL2.